The primary structure comprises 300 residues: Cathepsin B-like CP2 (300 aa).

Residues 1 to 19 (MKLFLLAAAAFSAPALTVS) form the signal peptide. Disulfide bonds link Cys88–Cys115, Cys98–Cys141, and Cys134–Cys177. Cys101 is an active-site residue. Active-site residues include His245 and Asn266.

Belongs to the peptidase C1 family.

The protein resides in the vacuole. Thiol protease which is required for parasite excystation and invasion of the proximal small intestine of the human host. The chain is Cathepsin B-like CP2 (CP2) from Giardia intestinalis (Giardia lamblia).